The primary structure comprises 130 residues: Small ribosomal subunit protein uS8 (130 aa).

Lysine 88 is subject to N6-succinyllysine.

The protein belongs to the universal ribosomal protein uS8 family. As to quaternary structure, component of the 40S ribosomal subunit. Part of the small subunit (SSU) processome, composed of more than 70 proteins and the RNA chaperone small nucleolar RNA (snoRNA) U3.

Its subcellular location is the cytoplasm. The protein resides in the nucleus. It is found in the nucleolus. Component of the small ribosomal subunit. Part of the small subunit (SSU) processome, first precursor of the small eukaryotic ribosomal subunit. During the assembly of the SSU processome in the nucleolus, many ribosome biogenesis factors, an RNA chaperone and ribosomal proteins associate with the nascent pre-rRNA and work in concert to generate RNA folding, modifications, rearrangements and cleavage as well as targeted degradation of pre-ribosomal RNA by the RNA exosome. Required for proper erythropoiesis. The protein is Small ribosomal subunit protein uS8 (RPS15A) of Pongo abelii (Sumatran orangutan).